We begin with the raw amino-acid sequence, 299 residues long: tRNA uridine(34) hydroxylase (299 aa).

One can recognise a Rhodanese domain in the interval 132–226 (AGRPVVMLDT…YFEEVGGAHY (95 aa)). Cys186 serves as the catalytic Cysteine persulfide intermediate.

Belongs to the TrhO family.

It catalyses the reaction uridine(34) in tRNA + AH2 + O2 = 5-hydroxyuridine(34) in tRNA + A + H2O. Functionally, catalyzes oxygen-dependent 5-hydroxyuridine (ho5U) modification at position 34 in tRNAs. This is tRNA uridine(34) hydroxylase from Burkholderia pseudomallei (strain 1106a).